Consider the following 880-residue polypeptide: GAS2-like protein 2 (880 aa).

A Calponin-homology (CH) domain is found at 32–159 (EAMKEDLAEW…CLLELGRRAW (128 aa)). Residues 180–200 (RRELALPPPDPSPPAPPRRQP) are disordered. Pro residues predominate over residues 185–198 (LPPPDPSPPAPPRR). In terms of domain architecture, GAR spans 201 to 273 (CHFRNLDQMV…HYLDKHDPCR (73 aa)). Disordered regions lie at residues 283 to 360 (SFLK…MAPF), 372 to 437 (WRQP…NPTP), 489 to 533 (ESVR…ELGR), and 676 to 880 (APTG…ESWV). Residues 301–315 (GPSQTQPTMTISRSQ) show a composition bias toward polar residues. The tract at residues 438–880 (QRLRAIEATT…PLPPEEESWV (443 aa)) is interaction with ADORA2A. The span at 506-515 (RLPPARPPTP) shows a compositional bias: pro residues. Polar residues predominate over residues 725-734 (QDCSASTVSA). Composition is skewed to basic residues over residues 757–767 (KGRRTLRKPKR) and 774–785 (LKLRPRIRPRRD).

Belongs to the GAS2 family. Interacts with ADORA2A (via its cytoplasmic C-terminal domain). Interacts with GNAS, GNAL, GNAQ, and GNA13. Interacts with MAPRE1. As to expression, expressed in bronchial and nasal epithelial cells (at protein level). Expressed in brain, kidney, lung, testis, fallopian tubes, and skeletal muscle. Expressed at low levels in stomach and colon.

It localises to the cytoplasm. It is found in the cytoskeleton. Its subcellular location is the cell membrane. The protein localises to the stress fiber. The protein resides in the cilium basal body. Functionally, involved in the cross-linking of microtubules and microfilaments. Regulates microtubule dynamics and stability by interacting with microtubule plus-end tracking proteins, such as MAPRE1, to regulate microtubule growth along actin stress fibers. Enhances ADORA2-mediated adenylyl cyclase activation by acting as a scaffold to recruit trimeric G-protein complexes to ADORA2A. Regulates ciliary orientation and performance in cells located in the airway. The chain is GAS2-like protein 2 (GAS2L2) from Homo sapiens (Human).